The chain runs to 324 residues: Biotin synthase (324 aa).

Residues 50-278 (HAGPAFTCAI…QADILVAGGR (229 aa)) enclose the Radical SAM core domain. 3 residues coordinate [4Fe-4S] cluster: Cys67, Cys71, and Cys74. [2Fe-2S] cluster contacts are provided by Cys143 and Cys203.

This sequence belongs to the radical SAM superfamily. Biotin synthase family. Homodimer. [4Fe-4S] cluster is required as a cofactor. It depends on [2Fe-2S] cluster as a cofactor.

It carries out the reaction (4R,5S)-dethiobiotin + (sulfur carrier)-SH + 2 reduced [2Fe-2S]-[ferredoxin] + 2 S-adenosyl-L-methionine = (sulfur carrier)-H + biotin + 2 5'-deoxyadenosine + 2 L-methionine + 2 oxidized [2Fe-2S]-[ferredoxin]. It participates in cofactor biosynthesis; biotin biosynthesis; biotin from 7,8-diaminononanoate: step 2/2. Its function is as follows. Catalyzes the conversion of dethiobiotin (DTB) to biotin by the insertion of a sulfur atom into dethiobiotin via a radical-based mechanism. This chain is Biotin synthase, found in Oleidesulfovibrio alaskensis (strain ATCC BAA-1058 / DSM 17464 / G20) (Desulfovibrio alaskensis).